The chain runs to 463 residues: Chaperone SurA (463 aa).

The signal sequence occupies residues 1-25 (MTKPFSVVLASLLAITSTISPLASA). PpiC domains follow at residues 174 to 276 (GSKY…KLME) and 289 to 388 (VTEY…QRVG). Disordered stretches follow at residues 329–348 (ATAK…GDLG) and 434–463 (GDRA…KPTR). Residues 439–452 (NNATAAPAKSADPA) are compositionally biased toward low complexity. Residues 453–463 (LPAPPPAKPTR) show a composition bias toward pro residues.

Its subcellular location is the periplasm. The catalysed reaction is [protein]-peptidylproline (omega=180) = [protein]-peptidylproline (omega=0). Functionally, chaperone involved in the correct folding and assembly of outer membrane proteins. Recognizes specific patterns of aromatic residues and the orientation of their side chains, which are found more frequently in integral outer membrane proteins. May act in both early periplasmic and late outer membrane-associated steps of protein maturation. The polypeptide is Chaperone SurA (Xanthomonas oryzae pv. oryzae (strain MAFF 311018)).